We begin with the raw amino-acid sequence, 398 residues long: MTGQRATPQPTLDDLPLRDDLRGKSPYGAPQLAVPVRLNTNENPHPPSRALVDDVVRSVARAAADLHRYPDRDAVQLRSDLARYLTAQTGVQLGVENLWAANGSNEILQQLLQAFGGPGRSAIGFVPSYSMHPIISDGTRTEWLQAARADDFSLDVDAAVAAVTERTPDVVFVASPNNPSGQSVSLSGLRRLLDAAPGIVIVDEAYGEFSSQPSAVQLVGEYPTKLVVTRTMSKAFAFAGGRLGYLIATPAVIEAMLLVRLPYHLSSVTQAAARAALRHADDTLGSVAALIAERERVSTALTGMGFRVIPSDANFVLFGEFTDAPASWQRYLDAGVLIRDVGIPGYLRATTGLAEENDAFLRASAQLAATELAPVNVGAIANAAEPRAAGRDRVLGAP.

Positions Met-1–Pro-10 are enriched in polar residues. The tract at residues Met-1–Pro-30 is disordered. Residue Lys-234 is modified to N6-(pyridoxal phosphate)lysine.

This sequence belongs to the class-II pyridoxal-phosphate-dependent aminotransferase family. Histidinol-phosphate aminotransferase subfamily. In terms of assembly, homodimer. The cofactor is pyridoxal 5'-phosphate.

It carries out the reaction L-histidinol phosphate + 2-oxoglutarate = 3-(imidazol-4-yl)-2-oxopropyl phosphate + L-glutamate. The protein operates within amino-acid biosynthesis; L-histidine biosynthesis; L-histidine from 5-phospho-alpha-D-ribose 1-diphosphate: step 7/9. The protein is Histidinol-phosphate aminotransferase of Mycolicibacterium paratuberculosis (strain ATCC BAA-968 / K-10) (Mycobacterium paratuberculosis).